Reading from the N-terminus, the 69-residue chain is Cytoinsectotoxin-2a (69 aa).

It belongs to the cationic peptide 06 (cytoinsectotoxin) family. Expressed by the venom gland.

The protein resides in the secreted. Insecticidal and antimicrobial peptide. Has insecticidal activity against larvae of flesh fly S.carnaria. Has antibacterial activity against Gram-positive bacterium B.subtilis B-501 (MIC=1.25 uM) and Gram-negative bacterium E.coli DH5alpha (MIC=2.5 uM). The protein is Cytoinsectotoxin-2a of Lachesana tarabaevi (Spider).